A 443-amino-acid polypeptide reads, in one-letter code: Xaa-Pro dipeptidase (443 aa).

Residues Asp246, Asp257, His339, Glu384, and Glu423 each contribute to the Mn(2+) site.

The protein belongs to the peptidase M24B family. Bacterial-type prolidase subfamily. Requires Mn(2+) as cofactor.

The enzyme catalyses Xaa-L-Pro dipeptide + H2O = an L-alpha-amino acid + L-proline. Functionally, splits dipeptides with a prolyl residue in the C-terminal position. The polypeptide is Xaa-Pro dipeptidase (Serratia proteamaculans (strain 568)).